The primary structure comprises 239 residues: NAD(P)H-quinone oxidoreductase subunit K, chloroplastic (239 aa).

[4Fe-4S] cluster-binding residues include Cys43, Cys44, Cys108, and Cys139. A disordered region spans residues 217–239 (KSSVSSRELGNESGKEDVSIQNK). A compositionally biased stretch (basic and acidic residues) spans 225–239 (LGNESGKEDVSIQNK).

This sequence belongs to the complex I 20 kDa subunit family. As to quaternary structure, NDH is composed of at least 16 different subunits, 5 of which are encoded in the nucleus. The cofactor is [4Fe-4S] cluster.

The protein localises to the plastid. Its subcellular location is the chloroplast thylakoid membrane. The catalysed reaction is a plastoquinone + NADH + (n+1) H(+)(in) = a plastoquinol + NAD(+) + n H(+)(out). The enzyme catalyses a plastoquinone + NADPH + (n+1) H(+)(in) = a plastoquinol + NADP(+) + n H(+)(out). In terms of biological role, NDH shuttles electrons from NAD(P)H:plastoquinone, via FMN and iron-sulfur (Fe-S) centers, to quinones in the photosynthetic chain and possibly in a chloroplast respiratory chain. The immediate electron acceptor for the enzyme in this species is believed to be plastoquinone. Couples the redox reaction to proton translocation, and thus conserves the redox energy in a proton gradient. In Acorus calamus var. americanus (American sweet flag), this protein is NAD(P)H-quinone oxidoreductase subunit K, chloroplastic.